Here is a 231-residue protein sequence, read N- to C-terminus: Phosphatidylserine decarboxylase proenzyme (231 aa).

Ser188 functions as the Schiff-base intermediate with substrate; via pyruvic acid in the catalytic mechanism. Ser188 is modified (pyruvic acid (Ser); by autocatalysis).

This sequence belongs to the phosphatidylserine decarboxylase family. PSD-A subfamily. Heterodimer of a large membrane-associated beta subunit and a small pyruvoyl-containing alpha subunit. Requires pyruvate as cofactor. Post-translationally, is synthesized initially as an inactive proenzyme. Formation of the active enzyme involves a self-maturation process in which the active site pyruvoyl group is generated from an internal serine residue via an autocatalytic post-translational modification. Two non-identical subunits are generated from the proenzyme in this reaction, and the pyruvate is formed at the N-terminus of the alpha chain, which is derived from the carboxyl end of the proenzyme. The post-translation cleavage follows an unusual pathway, termed non-hydrolytic serinolysis, in which the side chain hydroxyl group of the serine supplies its oxygen atom to form the C-terminus of the beta chain, while the remainder of the serine residue undergoes an oxidative deamination to produce ammonia and the pyruvoyl prosthetic group on the alpha chain.

The protein resides in the cell membrane. The enzyme catalyses a 1,2-diacyl-sn-glycero-3-phospho-L-serine + H(+) = a 1,2-diacyl-sn-glycero-3-phosphoethanolamine + CO2. Its pathway is phospholipid metabolism; phosphatidylethanolamine biosynthesis; phosphatidylethanolamine from CDP-diacylglycerol: step 2/2. Catalyzes the formation of phosphatidylethanolamine (PtdEtn) from phosphatidylserine (PtdSer). This Rickettsia peacockii (strain Rustic) protein is Phosphatidylserine decarboxylase proenzyme.